The following is a 274-amino-acid chain: Dehydration-responsive element-binding protein 2A (274 aa).

2 stretches are compositionally biased toward basic and acidic residues: residues 1 to 10 (MERGEGRRGD) and 35 to 50 (KWWK…ENSS). The tract at residues 1–75 (MERGEGRRGD…KGGPENSNCA (75 aa)) is disordered. The AP2/ERF DNA-binding region spans 75–132 (AYRGVRQRTWGKWVAEIREPNRGRRLWLGSFPTALEAAHAYDEAARAMYGPTARVNFA).

Belongs to the AP2/ERF transcription factor family. ERF subfamily.

It localises to the nucleus. Transcriptional activator that binds specifically to the DNA sequence 5'-[AG]CCGAC-3' of the cis-acting dehydration-responsive element (DRE). Binding to the C-repeat/DRE element mediates high salinity- and dehydration-inducible transcription. In Oryza sativa subsp. japonica (Rice), this protein is Dehydration-responsive element-binding protein 2A (DREB2A).